The chain runs to 411 residues: uncharacterized protein (411 aa).

This is an uncharacterized protein from Mycoplasma genitalium (strain ATCC 33530 / DSM 19775 / NCTC 10195 / G37) (Mycoplasmoides genitalium).